The primary structure comprises 151 residues: 3-dehydroquinate dehydratase 1 (151 aa).

The active-site Proton acceptor is tyrosine 24. Substrate contacts are provided by asparagine 75, histidine 81, and aspartate 88. Histidine 101 functions as the Proton donor in the catalytic mechanism. Substrate is bound by residues 102 to 103 (IS) and arginine 112.

It belongs to the type-II 3-dehydroquinase family. As to quaternary structure, homododecamer.

The enzyme catalyses 3-dehydroquinate = 3-dehydroshikimate + H2O. It participates in metabolic intermediate biosynthesis; chorismate biosynthesis; chorismate from D-erythrose 4-phosphate and phosphoenolpyruvate: step 3/7. In terms of biological role, catalyzes a trans-dehydration via an enolate intermediate. This is 3-dehydroquinate dehydratase 1 (aroQ1) from Corynebacterium efficiens (strain DSM 44549 / YS-314 / AJ 12310 / JCM 11189 / NBRC 100395).